The sequence spans 394 residues: Acetate kinase (394 aa).

Asn-8 contacts Mg(2+). Lys-15 contacts ATP. Position 86 (Arg-86) interacts with substrate. Asp-143 (proton donor/acceptor) is an active-site residue. Residues 201–205, 276–278, and 324–328 each bind ATP; these read HLGNG, DCR, and GIGEN. Glu-378 contributes to the Mg(2+) binding site.

Belongs to the acetokinase family. Homodimer. Mg(2+) is required as a cofactor. Mn(2+) serves as cofactor.

The protein localises to the cytoplasm. It catalyses the reaction acetate + ATP = acetyl phosphate + ADP. It functions in the pathway metabolic intermediate biosynthesis; acetyl-CoA biosynthesis; acetyl-CoA from acetate: step 1/2. Functionally, catalyzes the formation of acetyl phosphate from acetate and ATP. Can also catalyze the reverse reaction. The polypeptide is Acetate kinase (Dichelobacter nodosus (strain VCS1703A)).